Here is a 711-residue protein sequence, read N- to C-terminus: Polyribonucleotide nucleotidyltransferase (711 aa).

Mg(2+)-binding residues include aspartate 491 and aspartate 497. The KH domain maps to 559 to 618; it reads PRLITIKINPEKIRDVIGKGGAVIRALTEETGTQIDISDEGVVTIASVDAAAGQEAKRRI. One can recognise an S1 motif domain in the interval 628–696; sequence GKIYEGTVLK…DRGRLKLSMK (69 aa).

It belongs to the polyribonucleotide nucleotidyltransferase family. Mg(2+) is required as a cofactor.

The protein resides in the cytoplasm. It carries out the reaction RNA(n+1) + phosphate = RNA(n) + a ribonucleoside 5'-diphosphate. Functionally, involved in mRNA degradation. Catalyzes the phosphorolysis of single-stranded polyribonucleotides processively in the 3'- to 5'-direction. The chain is Polyribonucleotide nucleotidyltransferase from Janthinobacterium sp. (strain Marseille) (Minibacterium massiliensis).